Consider the following 711-residue polypeptide: Polyribonucleotide nucleotidyltransferase (711 aa).

Mg(2+)-binding residues include D486 and D492. The KH domain occupies 553–612 (PRIHTIKINPDKIKDVIGKGGSVIRALTEETGTTIEIEDDGTVKIAATDGEKAKHAIRRI). Residues 622–690 (GRVYTGKVTR…RQGRIRLSIK (69 aa)) enclose the S1 motif domain. A disordered region spans residues 690–711 (KEATEQSQPAAAPEAPAAEQGE). The segment covering 694–711 (EQSQPAAAPEAPAAEQGE) has biased composition (low complexity).

Belongs to the polyribonucleotide nucleotidyltransferase family. In terms of assembly, component of the RNA degradosome, which is a multiprotein complex involved in RNA processing and mRNA degradation. Requires Mg(2+) as cofactor.

Its subcellular location is the cytoplasm. It catalyses the reaction RNA(n+1) + phosphate = RNA(n) + a ribonucleoside 5'-diphosphate. Involved in mRNA degradation. Catalyzes the phosphorolysis of single-stranded polyribonucleotides processively in the 3'- to 5'-direction. This chain is Polyribonucleotide nucleotidyltransferase, found in Shigella dysenteriae serotype 1 (strain Sd197).